Reading from the N-terminus, the 148-residue chain is UPF0756 membrane protein NMCC_1816 (148 aa).

The next 4 membrane-spanning stretches (helical) occupy residues 13-35, 50-70, 80-100, and 121-141; these read LILLGVVSNNNSITISATILLLM, HGLNLGIILLTIGVLSPLVSG, FLNFKMISAVFIGIFVAWLAG, and VIGVAFMGGIPVGPLIAAGIL.

It belongs to the UPF0756 family.

It is found in the cell membrane. This is UPF0756 membrane protein NMCC_1816 from Neisseria meningitidis serogroup C (strain 053442).